Here is a 201-residue protein sequence, read N- to C-terminus: Iron-sulfur flavoprotein AF_1896 (201 aa).

Positions 46, 49, 52, and 57 each coordinate [4Fe-4S] cluster.

The protein belongs to the SsuE family. Isf subfamily. As to quaternary structure, homodimer. It depends on FMN as a cofactor. Requires [4Fe-4S] cluster as cofactor.

Functionally, redox-active protein probably involved in electron transport. The polypeptide is Iron-sulfur flavoprotein AF_1896 (Archaeoglobus fulgidus (strain ATCC 49558 / DSM 4304 / JCM 9628 / NBRC 100126 / VC-16)).